Here is a 357-residue protein sequence, read N- to C-terminus: MYPLVRRLLFLIPPEHAHKLVFAVLRGVAAVAPVCRLLRRLLGPTDPVLASTVFGVRFPAPLGLAAGFDKDGTALSSWGAMGFGYAEIGTVTAHPQPGNPAPRLFRLADDRALLNRMGFNNHGARALAIRLARHRPEIPIGVNIGKTKKTPAGDAVNDYRASARMVGPLASYLVVNVSSPNTPGLRDLQAVESLRPILSAVRAETSTPVLVKIAPDLSDSDLDDIADLAVELDLAGIVATNTTVSRDGLTTPGVDRLGPGGISGPPLAQRAVQVLRRLYDRVGDRLALISVGGIETADDAWERITAGASLLQGYTGFIYGGERWAKDIHEGIARRLHDGGFGSLHEAVGSARRRQPS.

FMN is bound by residues Ala66–Lys70 and Thr90. Lys70 serves as a coordination point for substrate. Asn115–Phe119 is a substrate binding site. FMN-binding residues include Asn143 and Asn176. Asn176 is a binding site for substrate. Ser179 serves as the catalytic Nucleophile. Asn181 provides a ligand contact to substrate. 2 residues coordinate FMN: Lys212 and Thr240. Asn241–Thr242 provides a ligand contact to substrate. FMN contacts are provided by residues Gly264, Gly293, and Tyr314–Thr315.

It belongs to the dihydroorotate dehydrogenase family. Type 2 subfamily. Monomer. Requires FMN as cofactor.

It is found in the cell membrane. The enzyme catalyses (S)-dihydroorotate + a quinone = orotate + a quinol. It participates in pyrimidine metabolism; UMP biosynthesis via de novo pathway; orotate from (S)-dihydroorotate (quinone route): step 1/1. Catalyzes the conversion of dihydroorotate to orotate with quinone as electron acceptor. The polypeptide is Dihydroorotate dehydrogenase (quinone) (Mycobacterium bovis (strain BCG / Pasteur 1173P2)).